Consider the following 226-residue polypeptide: Small ribosomal subunit protein uS2c (226 aa).

Belongs to the universal ribosomal protein uS2 family.

The protein localises to the plastid. Its subcellular location is the chloroplast. The protein is Small ribosomal subunit protein uS2c (rps2) of Ostreococcus tauri.